A 169-amino-acid polypeptide reads, in one-letter code: Small ribosomal subunit protein uS5 (169 aa).

Positions L15–V79 constitute an S5 DRBM domain.

The protein belongs to the universal ribosomal protein uS5 family. As to quaternary structure, part of the 30S ribosomal subunit. Contacts proteins S4 and S8.

Functionally, with S4 and S12 plays an important role in translational accuracy. In terms of biological role, located at the back of the 30S subunit body where it stabilizes the conformation of the head with respect to the body. The protein is Small ribosomal subunit protein uS5 of Koribacter versatilis (strain Ellin345).